The following is a 512-amino-acid chain: Maturase K (512 aa).

The protein belongs to the intron maturase 2 family. MatK subfamily.

The protein localises to the plastid. Its subcellular location is the chloroplast. Usually encoded in the trnK tRNA gene intron. Probably assists in splicing its own and other chloroplast group II introns. This is Maturase K from Acer campestre (Field maple).